The following is a 299-amino-acid chain: Probable lipid kinase YegS (299 aa).

The region spanning 2–133 (ANFPASLLIL…IDMARVNDKT (132 aa)) is the DAGKc domain. ATP is bound by residues T40, 66–72 (GDGTINE), and T95. Mg(2+) contacts are provided by L215, D218, and L220. E271 (proton acceptor) is an active-site residue.

This sequence belongs to the diacylglycerol/lipid kinase family. YegS lipid kinase subfamily. It depends on Mg(2+) as a cofactor. Ca(2+) serves as cofactor.

It is found in the cytoplasm. Probably phosphorylates lipids; the in vivo substrate is unknown. The protein is Probable lipid kinase YegS of Salmonella gallinarum (strain 287/91 / NCTC 13346).